The chain runs to 154 residues: Crossover junction endodeoxyribonuclease RuvC (154 aa).

Active-site residues include Asp7, Glu67, and Asp139. Mg(2+) contacts are provided by Asp7, Glu67, and Asp139.

The protein belongs to the RuvC family. In terms of assembly, homodimer which binds Holliday junction (HJ) DNA. The HJ becomes 2-fold symmetrical on binding to RuvC with unstacked arms; it has a different conformation from HJ DNA in complex with RuvA. In the full resolvosome a probable DNA-RuvA(4)-RuvB(12)-RuvC(2) complex forms which resolves the HJ. It depends on Mg(2+) as a cofactor.

The protein localises to the cytoplasm. It catalyses the reaction Endonucleolytic cleavage at a junction such as a reciprocal single-stranded crossover between two homologous DNA duplexes (Holliday junction).. In terms of biological role, the RuvA-RuvB-RuvC complex processes Holliday junction (HJ) DNA during genetic recombination and DNA repair. Endonuclease that resolves HJ intermediates. Cleaves cruciform DNA by making single-stranded nicks across the HJ at symmetrical positions within the homologous arms, yielding a 5'-phosphate and a 3'-hydroxyl group; requires a central core of homology in the junction. The consensus cleavage sequence is 5'-(A/T)TT(C/G)-3'. Cleavage occurs on the 3'-side of the TT dinucleotide at the point of strand exchange. HJ branch migration catalyzed by RuvA-RuvB allows RuvC to scan DNA until it finds its consensus sequence, where it cleaves and resolves the cruciform DNA. The polypeptide is Crossover junction endodeoxyribonuclease RuvC (Prochlorococcus marinus (strain NATL2A)).